The following is a 525-amino-acid chain: Lysine--tRNA ligase (525 aa).

Mg(2+) is bound by residues Glu-419 and Glu-426.

It belongs to the class-II aminoacyl-tRNA synthetase family. In terms of assembly, homodimer. Requires Mg(2+) as cofactor.

The protein resides in the cytoplasm. The enzyme catalyses tRNA(Lys) + L-lysine + ATP = L-lysyl-tRNA(Lys) + AMP + diphosphate. This Deinococcus radiodurans (strain ATCC 13939 / DSM 20539 / JCM 16871 / CCUG 27074 / LMG 4051 / NBRC 15346 / NCIMB 9279 / VKM B-1422 / R1) protein is Lysine--tRNA ligase (lysS).